The following is a 545-amino-acid chain: Calcium-dependent protein kinase 6 (545 aa).

Glycine 2 carries N-myristoyl glycine lipidation. The span at cysteine 34–serine 43 shows a compositional bias: low complexity. Residues cysteine 34–serine 58 are disordered. The Protein kinase domain occupies tyrosine 74–valine 332. Residues leucine 80–threonine 88 and lysine 103 contribute to the ATP site. Aspartate 198 serves as the catalytic Proton acceptor. The segment at alanine 338 to isoleucine 368 is autoinhibitory domain. 4 consecutive EF-hand domains span residues glutamate 375 to asparagine 410, leucine 411 to leucine 446, glutamate 447 to alanine 482, and isoleucine 486 to aspartate 516. Aspartate 388, aspartate 390, serine 392, glutamate 399, aspartate 424, aspartate 426, serine 428, threonine 430, glutamate 435, aspartate 460, aspartate 462, serine 464, tyrosine 466, glutamate 471, aspartate 494, aspartate 496, aspartate 498, arginine 500, and glutamate 505 together coordinate Ca(2+). A disordered region spans residues glycine 526–arginine 545. The span at proline 528–arginine 545 shows a compositional bias: low complexity.

It belongs to the protein kinase superfamily. Ser/Thr protein kinase family. CDPK subfamily.

It is found in the membrane. It carries out the reaction L-seryl-[protein] + ATP = O-phospho-L-seryl-[protein] + ADP + H(+). The enzyme catalyses L-threonyl-[protein] + ATP = O-phospho-L-threonyl-[protein] + ADP + H(+). With respect to regulation, activated by calcium. Autophosphorylation may play an important role in the regulation of the kinase activity. May play a role in signal transduction pathways that involve calcium as a second messenger. The sequence is that of Calcium-dependent protein kinase 6 from Oryza sativa subsp. japonica (Rice).